We begin with the raw amino-acid sequence, 810 residues long: LPS-assembly protein LptD (810 aa).

Disordered regions lie at residues 1 to 26 and 54 to 79; these read MTEQRRSPNKRANKPPALSGLSSRTG and SAVPDIDQTESVVETAPEVPLAPPVS. An N-terminal signal peptide occupies residues 1–49; sequence MTEQRRSPNKRANKPPALSGLSSRTGRLPASALRPLVLAMAGLSVGAHA.

Belongs to the LptD family. Component of the lipopolysaccharide transport and assembly complex. Interacts with LptE and LptA.

It is found in the cell outer membrane. Functionally, together with LptE, is involved in the assembly of lipopolysaccharide (LPS) at the surface of the outer membrane. The protein is LPS-assembly protein LptD of Cupriavidus pinatubonensis (strain JMP 134 / LMG 1197) (Cupriavidus necator (strain JMP 134)).